The following is a 230-amino-acid chain: Cytidylate kinase (230 aa).

Residue 12 to 20 participates in ATP binding; the sequence is GPSGAGKGT.

It belongs to the cytidylate kinase family. Type 1 subfamily.

The protein localises to the cytoplasm. The catalysed reaction is CMP + ATP = CDP + ADP. The enzyme catalyses dCMP + ATP = dCDP + ADP. The sequence is that of Cytidylate kinase from Shewanella sediminis (strain HAW-EB3).